Here is a 353-residue protein sequence, read N- to C-terminus: 3-deoxy-D-manno-octulosonic acid transferase (353 aa).

Glutamate 31 serves as the catalytic Proton acceptor. Residues 211–212 (PR), 247–249 (FGI), and 273–276 (NLLE) contribute to the CMP site.

It belongs to the glycosyltransferase group 1 family. Glycosyltransferase 30 subfamily. Can form homodimer, homotrimer and homotetramer.

Its subcellular location is the cell inner membrane. It catalyses the reaction lipid IVA (E. coli) + CMP-3-deoxy-beta-D-manno-octulosonate = alpha-Kdo-(2-&gt;6)-lipid IVA (E. coli) + CMP + H(+). Its pathway is bacterial outer membrane biogenesis; LPS core biosynthesis. In terms of biological role, involved in lipopolysaccharide (LPS) biosynthesis. Catalyzes the transfer of a single 3-deoxy-D-manno-octulosonate (Kdo) residue from CMP-Kdo to lipid IV(A), the tetraacyldisaccharide-1,4'-bisphosphate precursor of lipid A. Is strictly monofunctional, i.e. is capable of adding only a single Kdo residue to the acceptor lipid. The protein is 3-deoxy-D-manno-octulosonic acid transferase (kdtA) of Aquifex aeolicus (strain VF5).